The following is a 661-amino-acid chain: Kyphoscoliosis peptidase (661 aa).

Residues 28–41 show a composition bias toward polar residues; it reads GTLSDQQANPSSLL. Disordered regions lie at residues 28-47 and 115-136; these read GTLS…GGGF and QGDK…HAYP. Residues cysteine 225, histidine 267, and aspartate 282 contribute to the active site.

Belongs to the transglutaminase-like superfamily. In terms of assembly, interacts with IGFN1 and FLNC. In terms of tissue distribution, highly expressed in skeletal muscle.

Its subcellular location is the cytoplasm. The protein localises to the cytoskeleton. The protein resides in the myofibril. It localises to the sarcomere. It is found in the z line. Its function is as follows. Probable cytoskeleton-associated protease required for normal muscle growth. Involved in function, maturation and stabilization of the neuromuscular junction. May act by cleaving muscle-specific proteins such as FLNC. The chain is Kyphoscoliosis peptidase from Homo sapiens (Human).